We begin with the raw amino-acid sequence, 231 residues long: Biosynthetic peptidoglycan transglycosylase (231 aa).

The helical transmembrane segment at 12 to 34 (AAVLAGLALLLVALAVSYRWVPP) threads the bilayer.

Belongs to the glycosyltransferase 51 family.

It localises to the cell inner membrane. It carries out the reaction [GlcNAc-(1-&gt;4)-Mur2Ac(oyl-L-Ala-gamma-D-Glu-L-Lys-D-Ala-D-Ala)](n)-di-trans,octa-cis-undecaprenyl diphosphate + beta-D-GlcNAc-(1-&gt;4)-Mur2Ac(oyl-L-Ala-gamma-D-Glu-L-Lys-D-Ala-D-Ala)-di-trans,octa-cis-undecaprenyl diphosphate = [GlcNAc-(1-&gt;4)-Mur2Ac(oyl-L-Ala-gamma-D-Glu-L-Lys-D-Ala-D-Ala)](n+1)-di-trans,octa-cis-undecaprenyl diphosphate + di-trans,octa-cis-undecaprenyl diphosphate + H(+). It participates in cell wall biogenesis; peptidoglycan biosynthesis. Its function is as follows. Peptidoglycan polymerase that catalyzes glycan chain elongation from lipid-linked precursors. The protein is Biosynthetic peptidoglycan transglycosylase of Rhodospirillum centenum (strain ATCC 51521 / SW).